Consider the following 214-residue polypeptide: MKIILLGAPGAGKGTQAQFMMNKFGIPQISTGDMFRAAIKEGTELGKQAKALMDEGKLVPDELTVALVKDRIAQPDCANGFLLDGFPRTIPQADALKDSGVKIDLVLEFDVADEVIVERMSGRRVHQPSGRTYHVVYNPPKVEGKDDVTGEDLIIRQDDKPETVLERLAIYHKQTKPLIAYYTAEAEAGNTRYERLDGTKPVEEVSAELAKILG.

10–15 (GAGKGT) lines the ATP pocket. The tract at residues 30–59 (STGDMFRAAIKEGTELGKQAKALMDEGKLV) is NMP. Residues T31, R36, 57 to 59 (KLV), 85 to 88 (GFPR), and Q92 each bind AMP. Positions 122 to 159 (GRRVHQPSGRTYHVVYNPPKVEGKDDVTGEDLIIRQDD) are LID. ATP contacts are provided by residues R123 and 132–133 (TY). AMP contacts are provided by R156 and R167. K200 is an ATP binding site.

Belongs to the adenylate kinase family. In terms of assembly, monomer.

The protein localises to the cytoplasm. The enzyme catalyses AMP + ATP = 2 ADP. It functions in the pathway purine metabolism; AMP biosynthesis via salvage pathway; AMP from ADP: step 1/1. Its function is as follows. Catalyzes the reversible transfer of the terminal phosphate group between ATP and AMP. Plays an important role in cellular energy homeostasis and in adenine nucleotide metabolism. The chain is Adenylate kinase from Actinobacillus pleuropneumoniae serotype 5b (strain L20).